A 524-amino-acid chain; its full sequence is Bifunctional methyltransferase (524 aa).

Positions 1-306 (MQCSIKQILS…GHSRVILFSP (306 aa)) are hemK. The tract at residues 1-308 (MQCSIKQILS…SRVILFSPIN (308 aa)) is RF MTase. S-adenosyl-L-methionine-binding positions include 146 to 150 (GTGSG), Asp-169, Trp-198, Asn-213, Glu-353, Glu-378, Asn-405, and Asp-427. 213-216 (NPPY) provides a ligand contact to substrate. The interval 307 to 524 (INLNRSYARR…MILRHVLGDH (218 aa)) is tRNA (guanine-N(7)-)-methyltransferase. Residues 311–524 (RSYARRIGKS…MILRHVLGDH (214 aa)) are tRNA MTase. Asp-427 is an active-site residue. Residues Lys-431 and Asp-463 each coordinate substrate.

It in the C-terminal section; belongs to the class I-like SAM-binding methyltransferase superfamily. TrmB family. In the N-terminal section; belongs to the protein N5-glutamine methyltransferase family. PrmC subfamily.

The catalysed reaction is L-glutaminyl-[peptide chain release factor] + S-adenosyl-L-methionine = N(5)-methyl-L-glutaminyl-[peptide chain release factor] + S-adenosyl-L-homocysteine + H(+). It catalyses the reaction guanosine(46) in tRNA + S-adenosyl-L-methionine = N(7)-methylguanosine(46) in tRNA + S-adenosyl-L-homocysteine. Methylates the class 1 translation termination release factors RF1/PrfA and RF2/PrfB on the glutamine residue of the universally conserved GGQ motif. Functionally, catalyzes the formation of N(7)-methylguanine at position 46 (m7G46) in tRNA. This chain is Bifunctional methyltransferase (prmC/trmB), found in Rickettsia conorii (strain ATCC VR-613 / Malish 7).